We begin with the raw amino-acid sequence, 294 residues long: Small ribosomal subunit protein uS2 (294 aa).

Residues 232–294 (RATGTTEAPE…SAAGEADAAK (63 aa)) are disordered. The span at 246–259 (EWERELLEGSKSEE) shows a compositional bias: basic and acidic residues. The span at 260–294 (AAAPAAAEEAPAAAEEAPAAAEATESAAGEADAAK) shows a compositional bias: low complexity.

It belongs to the universal ribosomal protein uS2 family.

The sequence is that of Small ribosomal subunit protein uS2 from Arthrobacter sp. (strain FB24).